Here is a 224-residue protein sequence, read N- to C-terminus: MLKSLVVLLLTSRVIAFPTLDTDQTAALHKPQATPNSQGTHGGFFYYWWSDGQSPAAYTNLDGGSYCLRWESGGNLIGGKGWSPGTDNRTIQISGTFQGVENSYLAVYGWLETPKVEYYIVEYHGVFNPAYDAQILGTVICDGSVYDISRSTRVSSGGTKILPRYWSVRRNKRTGGTVQTGCHFDAWRSTGLSAADHGFQIVATEGYFSSGFAEMTVADTSAEE.

The N-terminal stretch at 1-16 (MLKSLVVLLLTSRVIA) is a signal peptide. The GH11 domain maps to 32-218 (QATPNSQGTH…SSGFAEMTVA (187 aa)). The N-linked (GlcNAc...) asparagine glycan is linked to Asn88. The active-site Nucleophile is the Glu117. Glu205 (proton donor) is an active-site residue.

It belongs to the glycosyl hydrolase 11 (cellulase G) family.

The enzyme catalyses Endohydrolysis of (1-&gt;4)-beta-D-xylosidic linkages in xylans.. It functions in the pathway glycan degradation; xylan degradation. In terms of biological role, endo-1,4-beta-xylanase involved in the hydrolysis of xylan, a major structural heterogeneous polysaccharide found in plant biomass representing the second most abundant polysaccharide in the biosphere, after cellulose. May act as an elicitor of plant defense responses in certain plants but does not exhibit any cell death when transiently expressed in N.benthamiana. This is Ethylene-inducing xylanase 5 from Verticillium dahliae (strain VdLs.17 / ATCC MYA-4575 / FGSC 10137) (Verticillium wilt).